The sequence spans 525 residues: Glucose-6-phosphate isomerase (525 aa).

Glutamate 347 acts as the Proton donor in catalysis. Active-site residues include histidine 378 and lysine 493.

It belongs to the GPI family.

The protein localises to the cytoplasm. It catalyses the reaction alpha-D-glucose 6-phosphate = beta-D-fructose 6-phosphate. Its pathway is carbohydrate biosynthesis; gluconeogenesis. The protein operates within carbohydrate degradation; glycolysis; D-glyceraldehyde 3-phosphate and glycerone phosphate from D-glucose: step 2/4. Catalyzes the reversible isomerization of glucose-6-phosphate to fructose-6-phosphate. This is Glucose-6-phosphate isomerase from Chlamydia trachomatis serovar D (strain ATCC VR-885 / DSM 19411 / UW-3/Cx).